A 341-amino-acid chain; its full sequence is ATPase GET3 (341 aa).

34 to 41 (KGGVGKTT) is an ATP binding site. Aspartate 63 is an active-site residue. 2 residues coordinate ATP: glutamate 245 and asparagine 272. The Zn(2+) site is built by cysteine 283 and cysteine 286.

The protein belongs to the arsA ATPase family. As to quaternary structure, homodimer.

Its subcellular location is the cytoplasm. It is found in the endoplasmic reticulum. Its function is as follows. ATPase required for the post-translational delivery of tail-anchored (TA) proteins to the endoplasmic reticulum. Recognizes and selectively binds the transmembrane domain of TA proteins in the cytosol. This complex then targets to the endoplasmic reticulum by membrane-bound receptors, where the tail-anchored protein is released for insertion. This process is regulated by ATP binding and hydrolysis. ATP binding drives the homodimer towards the closed dimer state, facilitating recognition of newly synthesized TA membrane proteins. ATP hydrolysis is required for insertion. Subsequently, the homodimer reverts towards the open dimer state, lowering its affinity for the membrane-bound receptor, and returning it to the cytosol to initiate a new round of targeting. This is ATPase GET3 from Ajellomyces dermatitidis (strain ER-3 / ATCC MYA-2586) (Blastomyces dermatitidis).